The primary structure comprises 164 residues: Protein-export protein SecB (164 aa).

The protein belongs to the SecB family. Homotetramer, a dimer of dimers. One homotetramer interacts with 1 SecA dimer.

The protein resides in the cytoplasm. In terms of biological role, one of the proteins required for the normal export of preproteins out of the cell cytoplasm. It is a molecular chaperone that binds to a subset of precursor proteins, maintaining them in a translocation-competent state. It also specifically binds to its receptor SecA. The protein is Protein-export protein SecB of Zymomonas mobilis subsp. mobilis (strain ATCC 31821 / ZM4 / CP4).